The chain runs to 283 residues: Lipoyl synthase (283 aa).

The [4Fe-4S] cluster site is built by cysteine 35, cysteine 40, cysteine 46, cysteine 61, cysteine 65, cysteine 68, and serine 273. The Radical SAM core domain maps to 47-262 (FRSRQATFLI…RERALAMGFK (216 aa)).

The protein belongs to the radical SAM superfamily. Lipoyl synthase family. It depends on [4Fe-4S] cluster as a cofactor.

The protein resides in the cytoplasm. The enzyme catalyses [[Fe-S] cluster scaffold protein carrying a second [4Fe-4S](2+) cluster] + N(6)-octanoyl-L-lysyl-[protein] + 2 oxidized [2Fe-2S]-[ferredoxin] + 2 S-adenosyl-L-methionine + 4 H(+) = [[Fe-S] cluster scaffold protein] + N(6)-[(R)-dihydrolipoyl]-L-lysyl-[protein] + 4 Fe(3+) + 2 hydrogen sulfide + 2 5'-deoxyadenosine + 2 L-methionine + 2 reduced [2Fe-2S]-[ferredoxin]. It functions in the pathway protein modification; protein lipoylation via endogenous pathway; protein N(6)-(lipoyl)lysine from octanoyl-[acyl-carrier-protein]: step 2/2. In terms of biological role, catalyzes the radical-mediated insertion of two sulfur atoms into the C-6 and C-8 positions of the octanoyl moiety bound to the lipoyl domains of lipoate-dependent enzymes, thereby converting the octanoylated domains into lipoylated derivatives. This chain is Lipoyl synthase, found in Geotalea uraniireducens (strain Rf4) (Geobacter uraniireducens).